A 440-amino-acid polypeptide reads, in one-letter code: Glucoside xylosyltransferase 1 (440 aa).

Residues 1-6 (MRRYLR) lie on the Cytoplasmic side of the membrane. Residues 7–29 (VVVLCVACGFCSLLYAFSQLAVS) form a helical; Signal-anchor for type II membrane protein membrane-spanning segment. Residues 30 to 440 (LEEGTGGGGG…DRYARSPKEK (411 aa)) lie on the Lumenal side of the membrane. N-linked (GlcNAc...) asparagine glycosylation is found at Asn-173, Asn-237, and Asn-278.

It belongs to the glycosyltransferase 8 family.

Its subcellular location is the membrane. It catalyses the reaction 3-O-(beta-D-glucosyl)-L-seryl-[EGF-like domain protein] + UDP-alpha-D-xylose = 3-O-[alpha-D-xylosyl-(1-&gt;3)-beta-D-glucosyl]-L-seryl-[EGF-like domain protein] + UDP + H(+). Its function is as follows. Glycosyltransferase which elongates the O-linked glucose attached to EGF-like repeats in the extracellular domain of Notch proteins by catalyzing the addition of xylose. In Homo sapiens (Human), this protein is Glucoside xylosyltransferase 1 (GXYLT1).